We begin with the raw amino-acid sequence, 288 residues long: 4-hydroxybenzoate octaprenyltransferase (288 aa).

The next 6 helical transmembrane spans lie at 33–53 (LWAL…AVFV), 99–119 (LFIV…TMTI), 163–183 (ESLP…AVAY), 213–233 (LIIG…GWLN), 234–254 (GLGW…GWQQ), and 268–288 (AFMN…MSYL).

The protein belongs to the UbiA prenyltransferase family. Mg(2+) is required as a cofactor.

The protein resides in the cell inner membrane. The enzyme catalyses all-trans-octaprenyl diphosphate + 4-hydroxybenzoate = 4-hydroxy-3-(all-trans-octaprenyl)benzoate + diphosphate. Its pathway is cofactor biosynthesis; ubiquinone biosynthesis. In terms of biological role, catalyzes the prenylation of para-hydroxybenzoate (PHB) with an all-trans polyprenyl group. Mediates the second step in the final reaction sequence of ubiquinone-8 (UQ-8) biosynthesis, which is the condensation of the polyisoprenoid side chain with PHB, generating the first membrane-bound Q intermediate 3-octaprenyl-4-hydroxybenzoate. The polypeptide is 4-hydroxybenzoate octaprenyltransferase (Klebsiella pneumoniae subsp. pneumoniae (strain ATCC 700721 / MGH 78578)).